The primary structure comprises 860 residues: MTEYTPMIKQYLEIKDKYQDAFLFFRLGDFYEMFFEDALNASQILEITLTGREGGTKEKIPMCGVPYHSASGYIDTLIEKGYKVAICEQVEDPKTTKGMVKREVVQLISPGTVMDERGLKAKENNYIASLYCYEGKEYGFAYSDLSTGELKSTVIEASEDRLINELTTLSTRELIVSASEKEVLSDVMKEQLGLTFSVHEEDTIPLENEKLVTRHMSLSEKRAIGKLLHYLKETQKRDLGHLQQAVHYETSNYMKMDYYSKRNLELAESIRGKGRQGTLLWLLDNTQTAMGGRMLKQWIDRPLIDRNKIIERQNDVSELMANFFERLELVENLKNVYDLERLAGRVAYGNVNARDLIQLRNSLYQIPRIRATLLSMNSKSLTELANQLDPCEELTEKLEEAIMDSAPISIREGGIIKDGYNSQLDTYRDASRNGKTWIAELERKERELTGIKTMKVGFNRVFGYYIEVTRANTHLLPEGRYERKQTLTNAERYITPELKEKEKLILDAEEKSMELEYQLFTEVRELVKDYIERLQKLAKSVSEIDCLQSFADISEKNHFIRPTLSEDGSLHVKQGRHPVVEKVMGAQSYVANDCDLDRNREILLITGPNMSGKSTYMRQVALTAICAQVGCFVPAEEATLPIFDQIFTRIGAADDLIAGQSTFMVEMLEARNAIVHATKDSLILFDEIGRGTATYDGMALAQAIIEYIHENVHAKTLFSTHYHELTDLEKELHGLQNIHVSAVEENGKVVFLHKIKEGPADKSYGIHVAELAELPKSLIERASRILEQLENDDKKIVITNDKQPEEIHEEVQLSMFPVEPEKKASSKETKLLKEIASMNIMQMTPMDAMNKLYELQSKIH.

607-614 serves as a coordination point for ATP; the sequence is GPNMSGKS.

Belongs to the DNA mismatch repair MutS family.

Its function is as follows. This protein is involved in the repair of mismatches in DNA. It is possible that it carries out the mismatch recognition step. This protein has a weak ATPase activity. The polypeptide is DNA mismatch repair protein MutS (Listeria monocytogenes serotype 4a (strain HCC23)).